The sequence spans 394 residues: S-adenosylmethionine synthase (394 aa).

Glutamate 10 lines the Mg(2+) pocket. Position 16 (histidine 16) interacts with ATP. Glutamate 44 contributes to the K(+) binding site. Positions 57 and 100 each coordinate L-methionine. ATP-binding positions include 168 to 170 (DGK), 236 to 239 (SGRF), aspartate 247, 253 to 254 (RK), alanine 270, lysine 274, and lysine 278. Residue aspartate 247 participates in L-methionine binding. Lysine 278 is an L-methionine binding site.

This sequence belongs to the AdoMet synthase family. Homotetramer. It depends on Mn(2+) as a cofactor. Mg(2+) serves as cofactor. The cofactor is Co(2+). K(+) is required as a cofactor.

It is found in the cytoplasm. It carries out the reaction L-methionine + ATP + H2O = S-adenosyl-L-methionine + phosphate + diphosphate. The protein operates within amino-acid biosynthesis; S-adenosyl-L-methionine biosynthesis; S-adenosyl-L-methionine from L-methionine: step 1/1. Catalyzes the formation of S-adenosylmethionine from methionine and ATP. The reaction comprises two steps that are both catalyzed by the same enzyme: formation of S-adenosylmethionine (AdoMet) and triphosphate, and subsequent hydrolysis of the triphosphate. The polypeptide is S-adenosylmethionine synthase (METK) (Medicago truncatula (Barrel medic)).